A 574-amino-acid polypeptide reads, in one-letter code: Secreted lipase 1 (574 aa).

A signal peptide spans 1–17; it reads MKLSLVPIFALLSTAFA. Cys-95 and Cys-132 are joined by a disulfide. The active-site Acyl-ester intermediate is the Ser-244. Cys-303 and Cys-312 are oxidised to a cystine. Asn-323 carries an N-linked (GlcNAc...) asparagine glycan. The active-site Charge relay system is the Glu-376. The N-linked (GlcNAc...) asparagine glycan is linked to Asn-386. His-489 serves as the catalytic Charge relay system. Residue Asn-524 is glycosylated (N-linked (GlcNAc...) asparagine).

Belongs to the type-B carboxylesterase/lipase family.

The protein resides in the secreted. It carries out the reaction a carboxylic ester + H2O = an alcohol + a carboxylate + H(+). Its function is as follows. Secreted lipase that allows the use of hydrolyzed lipids as carbon sources. Has highest activity with methyl umbelliferyl oleate (C18:1), whereas much lower activities are obtained with the respective esters of palmitate (C16:0) and stearate (C18:0) (24% and 12% of the activity obtained with umbelliferyl oleate, respectively). Hydrolyzes 1- and 3-positioned ester bonds in preference to 2-positioned ester bonds. The production rate of monoglycerides is lower than that of diacylglycerides. Seems not required for the penetration of intact host tissue. The chain is Secreted lipase 1 from Botryotinia fuckeliana (strain B05.10) (Noble rot fungus).